Consider the following 1196-residue polypeptide: DNA-directed RNA polymerase subunit beta (1196 aa).

It belongs to the RNA polymerase beta chain family. As to quaternary structure, the RNAP catalytic core consists of 2 alpha, 1 beta, 1 beta' and 1 omega subunit. When a sigma factor is associated with the core the holoenzyme is formed, which can initiate transcription.

It catalyses the reaction RNA(n) + a ribonucleoside 5'-triphosphate = RNA(n+1) + diphosphate. Its function is as follows. DNA-dependent RNA polymerase catalyzes the transcription of DNA into RNA using the four ribonucleoside triphosphates as substrates. This Lactococcus lactis subsp. lactis (strain IL1403) (Streptococcus lactis) protein is DNA-directed RNA polymerase subunit beta.